The chain runs to 640 residues: Guanylate-binding protein 4 (640 aa).

Residues 1–325 (MGERTLHAAV…DAINSGAVPC (325 aa)) are GTPase domain (Globular). A GB1/RHD3-type G domain is found at 50–292 (SQPVVVVAIV…FCSYIFTHAK (243 aa)). Residues 60 to 67 (GLYRTGKS), 82 to 84 (LGS), and 112 to 116 (DTEGL) each bind GTP. Residues 499 to 612 (GEKAIAAERA…EQLRLLKILD (114 aa)) are a coiled coil.

Belongs to the TRAFAC class dynamin-like GTPase superfamily. GB1/RHD3 GTPase family. GB1 subfamily. As to quaternary structure, heterodimer with other family members, including GBP1, GBP2 and GBP5. Dimerization regulates subcellular location. Interacts with IRF7; preventing interaction between TRAF6 and IRF7, resulting in impaired TRAF6-mediated IRF7 ubiquitination. Post-translationally, (Microbial infection) Ubiquitinated by S.flexneri IpaH9.8, leading to its degradation by the proteasome, thereby preventing its ability to promote host defense against bacterial infection.

It localises to the golgi apparatus membrane. It is found in the cytoplasm. The protein resides in the nucleus. The protein localises to the perinuclear region. The enzyme catalyses GTP + H2O = GDP + phosphate + H(+). Functionally, interferon (IFN)-inducible GTPase that plays important roles in innate immunity against a diverse range of bacterial, viral and protozoan pathogens. Negatively regulates the antiviral response by inhibiting activation of IRF7 transcription factor. The protein is Guanylate-binding protein 4 of Homo sapiens (Human).